We begin with the raw amino-acid sequence, 156 residues long: Snaclec A2 (156 aa).

A signal peptide spans 1-23 (MGRLISVSFGLLVVFLSLSGTGA). Disulfide bonds link Cys27–Cys38, Cys55–Cys154, and Cys129–Cys146. The region spanning 34 to 155 (HEGHCYKVFN…CGQPYRFTCE (122 aa)) is the C-type lectin domain.

This sequence belongs to the snaclec family. Heterodimer; disulfide-linked. As to expression, expressed by the venom gland.

It is found in the secreted. In terms of biological role, interferes with one step of hemostasis (modulation of platelet aggregation, or coagulation cascade, for example). The polypeptide is Snaclec A2 (Macrovipera lebetinus (Levantine viper)).